The sequence spans 232 residues: Flagellar L-ring protein (232 aa).

The first 21 residues, 1-21 (MQKNAAHTYAISSLLVLSLTG), serve as a signal peptide directing secretion. A lipid anchor (N-palmitoyl cysteine) is attached at cysteine 22. The S-diacylglycerol cysteine moiety is linked to residue cysteine 22.

The protein belongs to the FlgH family. As to quaternary structure, the basal body constitutes a major portion of the flagellar organelle and consists of four rings (L,P,S, and M) mounted on a central rod.

The protein resides in the cell outer membrane. It is found in the bacterial flagellum basal body. Its function is as follows. Assembles around the rod to form the L-ring and probably protects the motor/basal body from shearing forces during rotation. The protein is Flagellar L-ring protein of Shigella boydii serotype 4 (strain Sb227).